We begin with the raw amino-acid sequence, 316 residues long: Methionyl-tRNA formyltransferase (316 aa).

109-112 (SLLP) serves as a coordination point for (6S)-5,6,7,8-tetrahydrofolate.

This sequence belongs to the Fmt family.

The catalysed reaction is L-methionyl-tRNA(fMet) + (6R)-10-formyltetrahydrofolate = N-formyl-L-methionyl-tRNA(fMet) + (6S)-5,6,7,8-tetrahydrofolate + H(+). Functionally, attaches a formyl group to the free amino group of methionyl-tRNA(fMet). The formyl group appears to play a dual role in the initiator identity of N-formylmethionyl-tRNA by promoting its recognition by IF2 and preventing the misappropriation of this tRNA by the elongation apparatus. This is Methionyl-tRNA formyltransferase from Idiomarina loihiensis (strain ATCC BAA-735 / DSM 15497 / L2-TR).